The following is a 59-amino-acid chain: Potassium channel toxin alpha-KTx 4.5 (59 aa).

The N-terminal stretch at 1-22 (MKAFYGVLIIFILISMLDLSQQ) is a signal peptide. Intrachain disulfides connect Cys-29/Cys-50, Cys-35/Cys-55, and Cys-39/Cys-57. The tract at residues 48–55 (GKCMNGKC) is interaction with Ca(2+)-activated K(+) channels.

In terms of tissue distribution, expressed by the venom gland.

Its subcellular location is the secreted. In terms of biological role, inhibits with low potency Kv1.1/KCNA1, Kv1.2/KCNA2, Kv1.3/KCNA3 and Kv11.1/KCNH2/ERG1 voltage-gated potassium channels. In Tityus costatus (Brazilian scorpion), this protein is Potassium channel toxin alpha-KTx 4.5.